The primary structure comprises 130 residues: Small ribosomal subunit protein uS8 (130 aa).

It belongs to the universal ribosomal protein uS8 family. Part of the 30S ribosomal subunit. Contacts proteins S5 and S12.

In terms of biological role, one of the primary rRNA binding proteins, it binds directly to 16S rRNA central domain where it helps coordinate assembly of the platform of the 30S subunit. This is Small ribosomal subunit protein uS8 from Cytophaga hutchinsonii (strain ATCC 33406 / DSM 1761 / CIP 103989 / NBRC 15051 / NCIMB 9469 / D465).